The primary structure comprises 202 residues: N-(5'-phosphoribosyl)anthranilate isomerase (202 aa).

Belongs to the TrpF family.

It carries out the reaction N-(5-phospho-beta-D-ribosyl)anthranilate = 1-(2-carboxyphenylamino)-1-deoxy-D-ribulose 5-phosphate. The protein operates within amino-acid biosynthesis; L-tryptophan biosynthesis; L-tryptophan from chorismate: step 3/5. In Listeria welshimeri serovar 6b (strain ATCC 35897 / DSM 20650 / CCUG 15529 / CIP 8149 / NCTC 11857 / SLCC 5334 / V8), this protein is N-(5'-phosphoribosyl)anthranilate isomerase.